Here is a 920-residue protein sequence, read N- to C-terminus: Isoleucine--tRNA ligase (920 aa).

The short motif at 58-68 (PYANGHLHLGH) is the 'HIGH' region element. Glu569 is a binding site for L-isoleucyl-5'-AMP. The 'KMSKS' region signature appears at 610-614 (KMSKS). Position 613 (Lys613) interacts with ATP. Positions 895, 898, 910, and 913 each coordinate Zn(2+).

The protein belongs to the class-I aminoacyl-tRNA synthetase family. IleS type 1 subfamily. Monomer. Zn(2+) is required as a cofactor.

The protein resides in the cytoplasm. It carries out the reaction tRNA(Ile) + L-isoleucine + ATP = L-isoleucyl-tRNA(Ile) + AMP + diphosphate. Catalyzes the attachment of isoleucine to tRNA(Ile). As IleRS can inadvertently accommodate and process structurally similar amino acids such as valine, to avoid such errors it has two additional distinct tRNA(Ile)-dependent editing activities. One activity is designated as 'pretransfer' editing and involves the hydrolysis of activated Val-AMP. The other activity is designated 'posttransfer' editing and involves deacylation of mischarged Val-tRNA(Ile). The protein is Isoleucine--tRNA ligase of Helicobacter pylori (strain HPAG1).